The following is a 164-amino-acid chain: Large ribosomal subunit protein uL10 (164 aa).

This sequence belongs to the universal ribosomal protein uL10 family. In terms of assembly, part of the ribosomal stalk of the 50S ribosomal subunit. The N-terminus interacts with L11 and the large rRNA to form the base of the stalk. The C-terminus forms an elongated spine to which L12 dimers bind in a sequential fashion forming a multimeric L10(L12)X complex.

Its function is as follows. Forms part of the ribosomal stalk, playing a central role in the interaction of the ribosome with GTP-bound translation factors. The protein is Large ribosomal subunit protein uL10 (rplJ) of Helicobacter pylori (strain J99 / ATCC 700824) (Campylobacter pylori J99).